Here is a 317-residue protein sequence, read N- to C-terminus: Apolipoprotein E (317 aa).

An N-terminal signal peptide occupies residues 1 to 18 (MKALWVALVVTLLAGCRA). A run of 8 repeats spans residues 79 to 100 (ALME…EQLS), 101 to 122 (PVAQ…ARLG), 123 to 144 (TDME…AMLG), 145 to 166 (QTTD…KRLL), 167 to 188 (RDAE…EGAE), 189 to 210 (RSVS…LGTA), 211 to 232 (TTST…QKLR), and 233 to 254 (GRLE…EQLE). An 8 X 22 AA approximate tandem repeats region spans residues 79 to 254 (ALMEETMKEV…RLDKMREQLE (176 aa)). The residue at position 142 (M142) is a Methionine sulfoxide. The interval 157–167 (HLRKLRKRLLR) is LDL and other lipoprotein receptors binding. Position 161–164 (161–164 (LRKR)) interacts with heparin. A lipid-binding and lipoprotein association region spans residues 209–289 (TATTSTLGSQ…GWFQPLVEDL (81 aa)). A glycan (O-linked (GalNAc...) threonine) is linked at T211. 228–235 (GQKLRGRL) is a heparin binding site. Residues 265–317 (SQMRLQAETFQARLKGWFQPLVEDLQRQWAGLVEKVQQLAVGTTPTPAASKNQ) are homooligomerization. The tract at residues 277–289 (RLKGWFQPLVEDL) is specificity for association with VLDL. An O-linked (GalNAc...) threonine glycan is attached at T310.

The protein belongs to the apolipoprotein A1/A4/E family. As to quaternary structure, homotetramer. May interact with ABCA1; functionally associated with ABCA1 in the biogenesis of HDLs. May interact with APP/A4 amyloid-beta peptide; the interaction is extremely stable in vitro but its physiological significance is unclear. May interact with MAPT. May interact with MAP2. In the cerebrospinal fluid, interacts with secreted SORL1. Interacts with PMEL; this allows the loading of PMEL luminal fragment on ILVs to induce fibril nucleation. APOE exists as multiple glycosylated and sialylated glycoforms within cells and in plasma. The extent of glycosylation and sialylation are tissue and context specific. Post-translationally, glycated in plasma VLDL. In terms of processing, phosphorylated by FAM20C in the extracellular medium.

It localises to the secreted. It is found in the extracellular space. The protein resides in the extracellular matrix. The protein localises to the extracellular vesicle. Its subcellular location is the endosome. It localises to the multivesicular body. Functionally, APOE is an apolipoprotein, a protein associating with lipid particles, that mainly functions in lipoprotein-mediated lipid transport between organs via the plasma and interstitial fluids. APOE is a core component of plasma lipoproteins and is involved in their production, conversion and clearance. Apolipoproteins are amphipathic molecules that interact both with lipids of the lipoprotein particle core and the aqueous environment of the plasma. As such, APOE associates with chylomicrons, chylomicron remnants, very low density lipoproteins (VLDL) and intermediate density lipoproteins (IDL) but shows a preferential binding to high-density lipoproteins (HDL). It also binds a wide range of cellular receptors including the LDL receptor/LDLR and the very low-density lipoprotein receptor/VLDLR that mediate the cellular uptake of the APOE-containing lipoprotein particles. Finally, APOE also has a heparin-binding activity and binds heparan-sulfate proteoglycans on the surface of cells, a property that supports the capture and the receptor-mediated uptake of APOE-containing lipoproteins by cells. The sequence is that of Apolipoprotein E (APOE) from Camelus dromedarius (Dromedary).